A 447-amino-acid polypeptide reads, in one-letter code: Glutamate--tRNA ligase 1 (447 aa).

The short motif at Pro10 to Asn20 is the 'HIGH' region element. Residues Lys240–Arg244 carry the 'KMSKS' region motif. Lys243 serves as a coordination point for ATP.

The protein belongs to the class-I aminoacyl-tRNA synthetase family. Glutamate--tRNA ligase type 1 subfamily. In terms of assembly, monomer.

Its subcellular location is the cytoplasm. The enzyme catalyses tRNA(Glu) + L-glutamate + ATP = L-glutamyl-tRNA(Glu) + AMP + diphosphate. In terms of biological role, catalyzes the attachment of glutamate to tRNA(Glu) in a two-step reaction: glutamate is first activated by ATP to form Glu-AMP and then transferred to the acceptor end of tRNA(Glu). The sequence is that of Glutamate--tRNA ligase 1 from Rickettsia prowazekii (strain Madrid E).